The sequence spans 308 residues: HPr kinase/phosphorylase (308 aa).

Catalysis depends on residues H138 and K159. 153 to 160 serves as a coordination point for ATP; it reads GESGLGKS. S160 provides a ligand contact to Mg(2+). D177 functions as the Proton acceptor; for phosphorylation activity. Proton donor; for dephosphorylation activity in the catalytic mechanism. The tract at residues 201-210 is important for the catalytic mechanism of both phosphorylation and dephosphorylation; that stretch reads LEVRGLGLLD. E202 contacts Mg(2+). R243 is a catalytic residue. An important for the catalytic mechanism of dephosphorylation region spans residues 264–269; sequence QVAAGR.

This sequence belongs to the HPrK/P family. As to quaternary structure, homohexamer. Requires Mg(2+) as cofactor.

The catalysed reaction is [HPr protein]-L-serine + ATP = [HPr protein]-O-phospho-L-serine + ADP + H(+). It carries out the reaction [HPr protein]-O-phospho-L-serine + phosphate + H(+) = [HPr protein]-L-serine + diphosphate. Functionally, catalyzes the ATP- as well as the pyrophosphate-dependent phosphorylation of a specific serine residue in HPr, a phosphocarrier protein of the phosphoenolpyruvate-dependent sugar phosphotransferase system (PTS). HprK/P also catalyzes the pyrophosphate-producing, inorganic phosphate-dependent dephosphorylation (phosphorolysis) of seryl-phosphorylated HPr (P-Ser-HPr). This is HPr kinase/phosphorylase from Bordetella avium (strain 197N).